Reading from the N-terminus, the 968-residue chain is RNA polymerase-associated protein RapA (968 aa).

The Helicase ATP-binding domain occupies 163–332; that stretch reads EVGRRYAPRV…FARLRLLDPD (170 aa). Residue 176-183 participates in ATP binding; it reads DEVGLGKT. Positions 278–281 match the DEAH box motif; sequence DEAH. The Helicase C-terminal domain maps to 491-643; that stretch reads RVDWLIAFLK…ELTCPSGHVL (153 aa).

Belongs to the SNF2/RAD54 helicase family. RapA subfamily. As to quaternary structure, interacts with the RNAP. Has a higher affinity for the core RNAP than for the holoenzyme. Its ATPase activity is stimulated by binding to RNAP.

Its function is as follows. Transcription regulator that activates transcription by stimulating RNA polymerase (RNAP) recycling in case of stress conditions such as supercoiled DNA or high salt concentrations. Probably acts by releasing the RNAP, when it is trapped or immobilized on tightly supercoiled DNA. Does not activate transcription on linear DNA. Probably not involved in DNA repair. The polypeptide is RNA polymerase-associated protein RapA (Shewanella sp. (strain W3-18-1)).